A 308-amino-acid chain; its full sequence is Ribonuclease HIII (308 aa).

In terms of domain architecture, RNase H type-2 spans 88-304 (FHCIGSDEAG…RDKAIHLINQ (217 aa)). A divalent metal cation contacts are provided by aspartate 94, glutamate 95, and aspartate 199.

Belongs to the RNase HII family. RnhC subfamily. It depends on Mn(2+) as a cofactor. Mg(2+) serves as cofactor.

Its subcellular location is the cytoplasm. It carries out the reaction Endonucleolytic cleavage to 5'-phosphomonoester.. Functionally, endonuclease that specifically degrades the RNA of RNA-DNA hybrids. The protein is Ribonuclease HIII of Staphylococcus epidermidis (strain ATCC 35984 / DSM 28319 / BCRC 17069 / CCUG 31568 / BM 3577 / RP62A).